Here is a 1537-residue protein sequence, read N- to C-terminus: MDISAPQSRADSRKDRWCPGERCLAPSLDNKKLCEASIKSITVDGNGKPFAVVLYPDFQEKTIPLQRLQEVKSTKDYSRSLIFDDKDLEKPYFPDRKIPSLASAFQLSEDGDSIPYTINRYLRDYQREGAQFLYRHYIEGRGCILGDDMGLGKTIQVISFLAAVLHKKGTREDIENNMPEFLLKSMKKKPPSTAKKMFLIVAPLSVLYNWKDELDTWGYFRVTVLHGSKKDNELLRLKQRKCEIALTTYETLRLCLEELNSLEWSAIIVDEAHRIKNPKARVTEVMKAVKCKVRIGLTGTVLQNNMKELWCVMDWAVPGLLGSRIHFKKQFSDPVEHGQRHTATKRELATGRKAMHRLAKKMSGWFLRRTKTLIKGQLPKKEDRMVYCSLTDFQKAVYQTVLETEDVALILTSSQPCTCGSGQKRRKCCYKTNSRGDTVRTLCLSYLTVLQKVANHVALLQAASTSKHQETVIKRICDRVFSRFPDFVQKSKDAAFETLSDPKYSGKMKVLQQLLNHFRKQRDKVLLFSFSTKLLDVLQQYCMASGLDYRRLDGSTKSEERLKIVKEFNSSQDVNICLVSTMAGGLGLNFVGANVVILFDPTWNPANDLQAVDRAYRIGQCRDVKVLRLISLGTVEEIMYLRQVYKQQLHCVVVGSENAKRYFEAVQGSKEHRGELFGVHNLFKLRSQGSCLTRDILEREGQVEAGIMTATTWLKGEPSAQELETPRDPDCQEPTDVCELYSDISDEESVGHSLGKTDKHKFSDTSRTPGFPAQLTLLQCGFSKLFEAKYKSDQDGDGNPVPSDGSSDEQPMCLSAEARQAARQKTWDSVCTSEHQKSDNIQTPDEKCVSDKSEKTLEQNVSSESDDETKDHRTAGHHCMGQGDTESEDSDVIFPTQYPTQRIPKNHIRFKLLLGESEDSEAENPVKVNHGDDRQNSGRGNGPVPNLLCLENMTSKSVRKRKGTDDISDESDDIDMFPKSRIRKQRATTSLKFKRKKENKRKLDNSPVTAKEANQVCAADGDRSSQVIEDFSSSDDNLSLSHLSFTKLSHRAETVKDKISLSPKLPGPDKKNNTFISRKPPSFLNEGVISQEQICNSMDKILDGVQEVAYIHSNQNVIGSSRAENHMSRWATRDVFELKQFSQLPANVAVCSSKTYKTQVKANIVSPTEKDQPPSDGGISSPLYVSHPVVQKKKDVYRTNHTTFIIGETPRGIRRKQFEEMASYYKLPVKEFAEQVTRATSEERQKMLRDFYSLQHPEVKEFFVNSASELIKSVHKKEERVRNKSKEKESLLKENPSNDSTLSCYDSTNKMSQVYNRKICEGKSVRSQNHVFHREDTFSSDAEINKSPVSFTEELHSERKDHTPKDTTTVFCPNSNSEALEAELGNSPGRQWDLTGACGSRNRPLFKLRNKRVENPGSENTPEDGLLGDTSILNDLFKSHGEGPTQLPKNVLSGPVAKAKQKPKDFWDILNEQNDDSLSKLTDLAVIETLCTKAPSTSASKRKDELEASLWKANEKFLWKTLSSDVDDESISNTERE.

The Helicase ATP-binding domain occupies 134-319 (YRHYIEGRGC…WCVMDWAVPG (186 aa)). 147–154 (DDMGLGKT) is a binding site for ATP. The short motif at 270 to 273 (DEAH) is the DEAH box element. Positions 510–660 (VLQQLLNHFR…CVVVGSENAK (151 aa)) constitute a Helicase C-terminal domain. Disordered stretches follow at residues 715-735 (KGEP…QEPT) and 749-768 (SVGH…TSRT). Positions 755–764 (GKTDKHKFSD) are enriched in basic and acidic residues. Positions 772 to 783 (PAQLTLLQCGFS) match the Atypical PIP-box motif. 3 disordered regions span residues 791 to 811 (KSDQ…DEQP), 833 to 891 (SEHQ…EDSD), and 918 to 948 (EDSE…PNLL). Basic and acidic residues predominate over residues 834-857 (EHQKSDNIQTPDEKCVSDKSEKTL). Phosphoserine occurs at positions 968 and 971. The segment at 1274–1306 (VHKKEERVRNKSKEKESLLKENPSNDSTLSCYD) is disordered. Over residues 1276 to 1292 (KKEERVRNKSKEKESLL) the composition is skewed to basic and acidic residues. Residues 1295–1306 (NPSNDSTLSCYD) show a composition bias toward polar residues.

Belongs to the SNF2/RAD54 helicase family. Interacts with NEK6. Interacts (via an atypical PIP-box) with PCNA; this interaction facilitates cenrtomeric localization of ERCC6L2. Interacts with CYREN; this interaction is DNA independent. Interacts with XRCC6 and XRCC5. In terms of processing, phosphorylated by NEK6.

Its subcellular location is the nucleus. It localises to the cytoplasm. The protein resides in the cytoskeleton. The protein localises to the microtubule organizing center. It is found in the centrosome. Its subcellular location is the mitochondrion. It localises to the chromosome. The protein resides in the centromere. In terms of biological role, promotes double-strand break (DSB) end-joining and facilitates programmed recombination by controlling how DNA ends are joined in a spatially oriented manner during repair. Also plays a role in DNA repair by restricting DNA end resection in double strand break (DSB) repair. Facilitates replication of complex DNA regions and regulates the maintenance of chromatin structure. This chain is DNA excision repair protein ERCC-6-like 2, found in Mus musculus (Mouse).